Consider the following 367-residue polypeptide: MNIQSIETYQVRLPLKTPFVTSYGRLEEKAFDLFVITDEQGNQGFGELVAFEQPDYVQETLVTERFIIQQHLIPLLLTEAIEQPQEVSTIFEEVKGHWMGKAALETAIWDLYAKRQQKSLTEFFGPTRRKIPVGISLGIQEDLPQLLKQVQLAVEKGYQRVKLKIRPGYDVEPVALIRQHFPNLPLMVDANSAYTLADLPQLQRLDHYQLAMIEQPFAADDFLDHAQLQRELKTRICLDENIRSLKDCQVALALGSCRSINLKIPRVGGIHEALKIAAFCQENDLLVWLGGMFESGVGRALNLQFASQPTFSFPGDISATERYFYEDIITEPFILEQGTMTVPQGLGIGVTLSQTNLLKYSQYQKIM.

Catalysis depends on lysine 164, which acts as the Proton donor. Residues aspartate 189, glutamate 214, and aspartate 239 each coordinate Mg(2+). The Proton acceptor role is filled by lysine 263.

It belongs to the mandelate racemase/muconate lactonizing enzyme family. MenC type 2 subfamily. Homodimer. Requires a divalent metal cation as cofactor.

It carries out the reaction (1R,6R)-6-hydroxy-2-succinyl-cyclohexa-2,4-diene-1-carboxylate = 2-succinylbenzoate + H2O. Its pathway is quinol/quinone metabolism; 1,4-dihydroxy-2-naphthoate biosynthesis; 1,4-dihydroxy-2-naphthoate from chorismate: step 4/7. It participates in quinol/quinone metabolism; menaquinone biosynthesis. Converts 2-succinyl-6-hydroxy-2,4-cyclohexadiene-1-carboxylate (SHCHC) to 2-succinylbenzoate (OSB). Also acts as a N-succinylamino acid racemase (NSAR) that catalyzes the racemization of N-succinyl-L-phenylglycine. Since the gene is encoded in a menaquinone synthesis operon, OSB synthase is probably the physiological activity. A pathway that requires NSAR activity has not been identified in this species, so whether NSAR is also a biological activity is unknown. The sequence is that of o-succinylbenzoate synthase from Enterococcus faecalis (strain ATCC 700802 / V583).